The chain runs to 162 residues: Disulfide bond formation protein B (162 aa).

Residues 1–10 (MGDWLLRRRG) lie on the Cytoplasmic side of the membrane. The chain crosses the membrane as a helical span at residues 11-27 (LALLLVLTLLLNLGALG). Residues 28 to 45 (LEYLADMPPCPLCWVQRG) are Periplasmic-facing. A disulfide bridge links C37 with C40. Residues 46-62 (VFGLMSLVALVGLVYFP) traverse the membrane as a helical segment. Topologically, residues 63–68 (RGWGRW) are cytoplasmic. Residues 69–86 (PLAGALGLSALTGVIIAL) form a helical membrane-spanning segment. At 87–140 (RHLYIQANPDAVSCGMSPEVLAQFLPWWEVLLEILSGTTDCTQVDAVLGVPLPG) the chain is on the periplasmic side. A disulfide bridge links C100 with C127. Residues 141 to 159 (WTLVGYLALGALGLYAVLA) traverse the membrane as a helical segment. Residues 160-162 (RRA) are Cytoplasmic-facing.

It belongs to the DsbB family.

The protein localises to the cell inner membrane. Required for disulfide bond formation in some periplasmic proteins. Acts by oxidizing the DsbA protein. In Alkalilimnicola ehrlichii (strain ATCC BAA-1101 / DSM 17681 / MLHE-1), this protein is Disulfide bond formation protein B.